The chain runs to 393 residues: Diphosphomevalonate decarboxylase (393 aa).

(R)-5-diphosphomevalonate is bound by residues 21-24 (YWGK), Arg77, 156-161 (SGSACR), and Thr212.

The protein belongs to the diphosphomevalonate decarboxylase family. In terms of assembly, homodimer.

Its subcellular location is the cytoplasm. The protein localises to the nucleus. The catalysed reaction is (R)-5-diphosphomevalonate + ATP = isopentenyl diphosphate + ADP + phosphate + CO2. It functions in the pathway isoprenoid biosynthesis; isopentenyl diphosphate biosynthesis via mevalonate pathway; isopentenyl diphosphate from (R)-mevalonate: step 3/3. In terms of biological role, diphosphomevalonate decarboxylase; part of the second module of ergosterol biosynthesis pathway that includes the middle steps of the pathway. Mvd1 converts diphosphomevalonate into isopentenyl diphosphate. The second module is carried out in the vacuole and involves the formation of farnesyl diphosphate, which is also an important intermediate in the biosynthesis of ubiquinone, dolichol, heme and prenylated proteins. Activity by the mevalonate kinase erg12 first converts mevalonate into 5-phosphomevalonate. 5-phosphomevalonate is then further converted to 5-diphosphomevalonate by the phosphomevalonate kinase erg8. The diphosphomevalonate decarboxylase mvd1 then produces isopentenyl diphosphate. The isopentenyl-diphosphate delta-isomerase idi1 then catalyzes the 1,3-allylic rearrangement of the homoallylic substrate isopentenyl (IPP) to its highly electrophilic allylic isomer, dimethylallyl diphosphate (DMAPP). Finally the farnesyl diphosphate synthase fps1 catalyzes the sequential condensation of isopentenyl pyrophosphate with dimethylallyl pyrophosphate, and then with the resultant geranylpyrophosphate to the ultimate product farnesyl pyrophosphate. This is Diphosphomevalonate decarboxylase (mvd1) from Schizosaccharomyces pombe (strain 972 / ATCC 24843) (Fission yeast).